We begin with the raw amino-acid sequence, 334 residues long: Probable prephenate dehydratase (334 aa).

Positions 7-224 constitute a Prephenate dehydratase domain; that stretch reads RVLFLGPKGT…NTTRFLVLKR (218 aa). Positions 244–322 constitute an ACT domain; the sequence is LTFTTRQDDP…SDKSKQWCLW (79 aa).

It localises to the cytoplasm. It carries out the reaction prephenate + H(+) = 3-phenylpyruvate + CO2 + H2O. It participates in amino-acid biosynthesis; L-phenylalanine biosynthesis; phenylpyruvate from prephenate: step 1/1. Functionally, catayzes the decarboxylation/dehydration of prephenate to phenylpyruvate. This is Probable prephenate dehydratase (PHA2) from Saccharomyces cerevisiae (strain ATCC 204508 / S288c) (Baker's yeast).